Consider the following 420-residue polypeptide: tRNA(Ile)-lysidine synthase (420 aa).

28–33 (SGGLDS) lines the ATP pocket.

This sequence belongs to the tRNA(Ile)-lysidine synthase family.

It localises to the cytoplasm. The catalysed reaction is cytidine(34) in tRNA(Ile2) + L-lysine + ATP = lysidine(34) in tRNA(Ile2) + AMP + diphosphate + H(+). Ligates lysine onto the cytidine present at position 34 of the AUA codon-specific tRNA(Ile) that contains the anticodon CAU, in an ATP-dependent manner. Cytidine is converted to lysidine, thus changing the amino acid specificity of the tRNA from methionine to isoleucine. The protein is tRNA(Ile)-lysidine synthase of Hydrogenovibrio crunogenus (strain DSM 25203 / XCL-2) (Thiomicrospira crunogena).